A 176-amino-acid chain; its full sequence is NAD(P)H-quinone oxidoreductase subunit J (176 aa).

This sequence belongs to the complex I 30 kDa subunit family. In terms of assembly, NDH-1 can be composed of about 15 different subunits; different subcomplexes with different compositions have been identified which probably have different functions.

The protein localises to the cellular thylakoid membrane. It catalyses the reaction a plastoquinone + NADH + (n+1) H(+)(in) = a plastoquinol + NAD(+) + n H(+)(out). The enzyme catalyses a plastoquinone + NADPH + (n+1) H(+)(in) = a plastoquinol + NADP(+) + n H(+)(out). In terms of biological role, NDH-1 shuttles electrons from an unknown electron donor, via FMN and iron-sulfur (Fe-S) centers, to quinones in the respiratory and/or the photosynthetic chain. The immediate electron acceptor for the enzyme in this species is believed to be plastoquinone. Couples the redox reaction to proton translocation, and thus conserves the redox energy in a proton gradient. Cyanobacterial NDH-1 also plays a role in inorganic carbon-concentration. In Prochlorococcus marinus subsp. pastoris (strain CCMP1986 / NIES-2087 / MED4), this protein is NAD(P)H-quinone oxidoreductase subunit J.